Reading from the N-terminus, the 264-residue chain is Thymidylate synthase (264 aa).

Arginine 21 contacts dUMP. Histidine 51 is a (6R)-5,10-methylene-5,6,7,8-tetrahydrofolate binding site. 126–127 (RR) is a dUMP binding site. The active-site Nucleophile is the cysteine 146. DUMP-binding positions include 166-169 (RSCD), asparagine 177, and 207-209 (HLY). Aspartate 169 contacts (6R)-5,10-methylene-5,6,7,8-tetrahydrofolate. Alanine 263 contributes to the (6R)-5,10-methylene-5,6,7,8-tetrahydrofolate binding site.

Belongs to the thymidylate synthase family. Bacterial-type ThyA subfamily. Homodimer.

The protein localises to the cytoplasm. The enzyme catalyses dUMP + (6R)-5,10-methylene-5,6,7,8-tetrahydrofolate = 7,8-dihydrofolate + dTMP. It participates in pyrimidine metabolism; dTTP biosynthesis. Its function is as follows. Catalyzes the reductive methylation of 2'-deoxyuridine-5'-monophosphate (dUMP) to 2'-deoxythymidine-5'-monophosphate (dTMP) while utilizing 5,10-methylenetetrahydrofolate (mTHF) as the methyl donor and reductant in the reaction, yielding dihydrofolate (DHF) as a by-product. This enzymatic reaction provides an intracellular de novo source of dTMP, an essential precursor for DNA biosynthesis. The chain is Thymidylate synthase from Yersinia pestis bv. Antiqua (strain Antiqua).